The chain runs to 317 residues: Beta-ketoacyl-[acyl-carrier-protein] synthase III (317 aa).

Catalysis depends on residues cysteine 112 and histidine 244. The interval 245–249 (QANLR) is ACP-binding. The active site involves asparagine 274.

The protein belongs to the thiolase-like superfamily. FabH family. As to quaternary structure, homodimer.

The protein resides in the cytoplasm. The enzyme catalyses malonyl-[ACP] + acetyl-CoA + H(+) = 3-oxobutanoyl-[ACP] + CO2 + CoA. Its pathway is lipid metabolism; fatty acid biosynthesis. Catalyzes the condensation reaction of fatty acid synthesis by the addition to an acyl acceptor of two carbons from malonyl-ACP. Catalyzes the first condensation reaction which initiates fatty acid synthesis and may therefore play a role in governing the total rate of fatty acid production. Possesses both acetoacetyl-ACP synthase and acetyl transacylase activities. Its substrate specificity determines the biosynthesis of branched-chain and/or straight-chain of fatty acids. This is Beta-ketoacyl-[acyl-carrier-protein] synthase III from Sodalis glossinidius (strain morsitans).